A 231-amino-acid polypeptide reads, in one-letter code: Large ribosomal subunit protein uL1 (231 aa).

The protein belongs to the universal ribosomal protein uL1 family. Part of the 50S ribosomal subunit.

Functionally, binds directly to 23S rRNA. The L1 stalk is quite mobile in the ribosome, and is involved in E site tRNA release. Protein L1 is also a translational repressor protein, it controls the translation of the L11 operon by binding to its mRNA. The sequence is that of Large ribosomal subunit protein uL1 from Francisella tularensis subsp. tularensis (strain WY96-3418).